Consider the following 178-residue polypeptide: Interleukin-10 (178 aa).

Positions 1–18 (MPGSALLCCLALLAGVKA) are cleaved as a signal peptide. Disulfide bonds link cysteine 30–cysteine 126 and cysteine 80–cysteine 132. Asparagine 67 is a glycosylation site (N-linked (GlcNAc...) asparagine). Asparagine 134 is a glycosylation site (N-linked (GlcNAc...) asparagine).

This sequence belongs to the IL-10 family. In terms of assembly, homodimer. Interacts with IL10RA and IL10RB.

The protein resides in the secreted. Its function is as follows. Major immune regulatory cytokine that acts on many cells of the immune system where it has profound anti-inflammatory functions, limiting excessive tissue disruption caused by inflammation. Mechanistically, IL10 binds to its heterotetrameric receptor comprising IL10RA and IL10RB leading to JAK1 and STAT2-mediated phosphorylation of STAT3. In turn, STAT3 translocates to the nucleus where it drives expression of anti-inflammatory mediators. Targets antigen-presenting cells (APCs) such as macrophages and monocytes and inhibits their release of pro-inflammatory cytokines including granulocyte-macrophage colony-stimulating factor /GM-CSF, granulocyte colony-stimulating factor/G-CSF, IL-1 alpha, IL-1 beta, IL-6, IL-8 and TNF-alpha. Also interferes with antigen presentation by reducing the expression of MHC-class II and co-stimulatory molecules, thereby inhibiting their ability to induce T cell activation. In addition, controls the inflammatory response of macrophages by reprogramming essential metabolic pathways including mTOR signaling. This chain is Interleukin-10 (IL10), found in Cavia porcellus (Guinea pig).